A 1216-amino-acid chain; its full sequence is Probable phospholipid-transporting ATPase 4 (1216 aa).

Residues 1–74 (MARGRIRSKL…TTRYNLITFF (74 aa)) lie on the Cytoplasmic side of the membrane. The chain crosses the membrane as a helical span at residues 75-96 (PKCLYEQFHRAANFYFLVAAIL). The Extracellular segment spans residues 97-100 (SVFP). The helical transmembrane segment at 101–123 (LSPFNKWSMIAPLVFVVGLSMLK) threads the bilayer. At 124–305 (EALEDWSRFM…SRIEKTMDYI (182 aa)) the chain is on the cytoplasmic side. Residues 306-327 (IYTLLVLLILISCISSSGFAWE) traverse the membrane as a helical segment. Residues 328 to 359 (TKFHMPKWWYLRPEEPENLTNPSNPVYAGFVH) are Extracellular-facing. The helical transmembrane segment at 360-377 (LITALLLYGYLIPISLYV) threads the bilayer. The Cytoplasmic portion of the chain corresponds to 378-922 (SIEVVKVLQA…HGHWCYKRIA (545 aa)). The active-site 4-aspartylphosphate intermediate is Asp-425. Lys-605 participates in a covalent cross-link: Glycyl lysine isopeptide (Lys-Gly) (interchain with G-Cter in ubiquitin). Positions 867 and 871 each coordinate Mg(2+). The chain crosses the membrane as a helical span at residues 923 to 942 (QMICYFFYKNIAFGLTLFYF). The Extracellular segment spans residues 943 to 956 (EAFTGFSGQSVYND). Residues 957-976 (YYLLLFNVVLTSLPVIALGV) traverse the membrane as a helical segment. Over 977 to 1006 (FEQDVSSEICLQFPALYQQGKKNLFFDWYR) the chain is Cytoplasmic. A helical transmembrane segment spans residues 1007-1029 (ILGWMGNGVYSSLVIFFLNIGII). The Extracellular segment spans residues 1030–1042 (YEQAFRVSGQTAD). The helical transmembrane segment at 1043–1065 (MDAVGTTMFTCIIWAVNVQIALT) threads the bilayer. The Cytoplasmic portion of the chain corresponds to 1066–1071 (VSHFTW). A helical transmembrane segment spans residues 1072–1092 (IQHVLIWGSIGLWYLFVALYG). The Extracellular portion of the chain corresponds to 1093–1109 (MMPPSLSGNIYRILVEI). The helical transmembrane segment at 1110-1134 (LAPAPIYWIATFLVTVTTVLPYFAH) threads the bilayer. The Cytoplasmic portion of the chain corresponds to 1135–1216 (ISFQRFLHPL…TQDTMSPRSV (82 aa)). The tract at residues 1195–1216 (LNKKQSNMSQFSTQDTMSPRSV) is disordered. The segment covering 1198 to 1216 (KQSNMSQFSTQDTMSPRSV) has biased composition (polar residues).

The protein belongs to the cation transport ATPase (P-type) (TC 3.A.3) family. Type IV subfamily.

It is found in the membrane. The catalysed reaction is ATP + H2O + phospholipidSide 1 = ADP + phosphate + phospholipidSide 2.. Its function is as follows. Involved in transport of phospholipids. The polypeptide is Probable phospholipid-transporting ATPase 4 (Arabidopsis thaliana (Mouse-ear cress)).